Here is a 110-residue protein sequence, read N- to C-terminus: Late cornified envelope protein 2C (110 aa).

Residues 1 to 10 (MSCQQNQQQC) are compositionally biased toward low complexity. Residues 1–23 (MSCQQNQQQCQPPPKCPPKCTPK) are disordered. Residues 11–23 (QPPPKCPPKCTPK) are compositionally biased toward pro residues.

It belongs to the LCE family. As to quaternary structure, interacts with CYSRT1; the interaction is direct. As to expression, skin-specific. Expression was readily detected in adult trunk skin, adult arm skin, fetal skin, penal skin, vulva, esophagus and tongue. Not expressed in the cervix, rectum, lung, colon, or placenta.

In terms of biological role, precursors of the cornified envelope of the stratum. This is Late cornified envelope protein 2C (LCE2C) from Homo sapiens (Human).